A 380-amino-acid polypeptide reads, in one-letter code: MDFNLNDEQELFVAGIRELMASENWEAYFAECDRDSVYPERFVKALADMGIDSLLIPEEHGGLEAGFVTVAAVWMELGRLGAPTYVLYQLPGGFNTFLREGTQEQIDKIMAFRGTGKQMWNSAITEPGAGSDVGSLKTTYTRKNGKVYLNGSKCFITSSAYTPYIVVMARDGASPDKPVYTEWFVDMSKAGIKVNKLEKLGLRMDSCCEITFDDVELDEKDMFGREGNGFNRVKEEFDHERFLVALTNYGTAMCTFEDAARYANQRVQFGEAIGRFQLIQEKFAHMAIKLNSMKNMLLEAAWKADNGTITSGDAAMCKYFCANAAFEVVDTAMQVLGGVGIAGNHRITRFWRDLRVDRVSGGSDEMQILTLGRAVLKQYR.

Belongs to the acyl-CoA dehydrogenase family. In terms of assembly, homotetramer. The cofactor is FAD.

Its subcellular location is the cytoplasm. The enzyme catalyses 4-(trimethylamino)butanoyl-CoA + oxidized [electron-transfer flavoprotein] + H(+) = crotonobetainyl-CoA + reduced [electron-transfer flavoprotein]. The protein operates within amine and polyamine metabolism; carnitine metabolism. Its function is as follows. Catalyzes the reduction of crotonobetainyl-CoA to gamma-butyrobetainyl-CoA. The protein is Crotonobetainyl-CoA reductase of Salmonella typhi.